The following is a 48-amino-acid chain: Small, acid-soluble spore protein G (48 aa).

Residues 1–16 (MSENRHENEENRRDAA) are compositionally biased toward basic and acidic residues. A disordered region spans residues 1 to 48 (MSENRHENEENRRDAAVAKVQNSGNAKVVVSVNTDQDQAQAQSQDGED). Residues 35–48 (DQDQAQAQSQDGED) show a composition bias toward low complexity.

This chain is Small, acid-soluble spore protein G (sspG), found in Bacillus subtilis (strain 168).